A 56-amino-acid chain; its full sequence is Large ribosomal subunit protein bL32 (56 aa).

A disordered region spans residues 1-56 (MAVQQNRKTRSKRGMRRSHDALSAPTLSQDKETGTTHRRHHVAPDGFYRGRKVVDV). Basic residues predominate over residues 7–16 (RKTRSKRGMR).

It belongs to the bacterial ribosomal protein bL32 family.

The protein is Large ribosomal subunit protein bL32 of Chromohalobacter salexigens (strain ATCC BAA-138 / DSM 3043 / CIP 106854 / NCIMB 13768 / 1H11).